Here is a 422-residue protein sequence, read N- to C-terminus: Dihydroorotase (422 aa).

Zn(2+)-binding residues include histidine 61 and histidine 63. Substrate is bound by residues 63–65 and asparagine 95; that span reads HLR. Aspartate 153 contacts Zn(2+). Residue asparagine 278 coordinates substrate. Zn(2+) is bound at residue aspartate 305. Aspartate 305 is a catalytic residue. Residues histidine 309 and 322–323 each bind substrate; that span reads PG.

This sequence belongs to the metallo-dependent hydrolases superfamily. DHOase family. Class I DHOase subfamily. In terms of assembly, monomer. Forms a 1:1 stoichiometric complex with PyrB. The complex exists as an equilibrium mixture of heterohexamers, composed of 3 PyrC and 3 PyrB subunits, and dodecamers. The complex has both DHOase and ATCase activities. The cofactor is Zn(2+).

The enzyme catalyses (S)-dihydroorotate + H2O = N-carbamoyl-L-aspartate + H(+). The protein operates within pyrimidine metabolism; UMP biosynthesis via de novo pathway; (S)-dihydroorotate from bicarbonate: step 3/3. The monomer has very low activity by itself. Activated several thousandfold by formation of a complex with PyrB aspartate carbamoyltransferase (ATCase). In terms of biological role, catalyzes the reversible cyclization of carbamoyl aspartate to dihydroorotate. The polypeptide is Dihydroorotase (Aquifex aeolicus (strain VF5)).